We begin with the raw amino-acid sequence, 431 residues long: Adenylosuccinate synthetase (431 aa).

GTP contacts are provided by residues 21–27 and 49–51; these read GDEGKGK and GHT. The active-site Proton acceptor is the aspartate 22. Residues aspartate 22 and glycine 49 each coordinate Mg(2+). IMP is bound by residues 22 to 25, 47 to 50, threonine 138, arginine 152, asparagine 230, threonine 245, and arginine 309; these read DEGK and NAGH. The Proton donor role is filled by histidine 50. Residue 305–311 participates in substrate binding; it reads ATTGRPR. GTP-binding positions include arginine 311, 337 to 339, and 419 to 421; these read KLD and GNG.

Belongs to the adenylosuccinate synthetase family. As to quaternary structure, homodimer. Mg(2+) is required as a cofactor.

It is found in the cytoplasm. The catalysed reaction is IMP + L-aspartate + GTP = N(6)-(1,2-dicarboxyethyl)-AMP + GDP + phosphate + 2 H(+). Its pathway is purine metabolism; AMP biosynthesis via de novo pathway; AMP from IMP: step 1/2. Functionally, plays an important role in the de novo pathway and in the salvage pathway of purine nucleotide biosynthesis. Catalyzes the first committed step in the biosynthesis of AMP from IMP. This Paramecium tetraurelia protein is Adenylosuccinate synthetase.